The sequence spans 205 residues: MSAIAPGLVLLAYLCGSISSAILVCRLAGLPDPRDSGSGNPGATNVLRIGGKGAAVAVLIFDVLKGMLPVWGAWALGLTPFWLGLVAIAACVGHIWPVFFHFRGGKGVATAFGAIAPIGLDLTGVMAGTWLLTILLSGYSSLGAIVSALIAPFYVWWFKPQYTFPVSMLSCLILLRHHDNIQRLWRRQESKIWTREKKKKTPEQK.

Transmembrane regions (helical) follow at residues 4–24, 80–100, 107–127, 130–150, and 155–175; these read IAPG…AILV, PFWL…PVFF, GVAT…GVMA, WLLT…SALI, and VWWF…LILL.

Belongs to the PlsY family. As to quaternary structure, probably interacts with PlsX.

Its subcellular location is the cell inner membrane. The enzyme catalyses an acyl phosphate + sn-glycerol 3-phosphate = a 1-acyl-sn-glycero-3-phosphate + phosphate. The protein operates within lipid metabolism; phospholipid metabolism. Functionally, catalyzes the transfer of an acyl group from acyl-phosphate (acyl-PO(4)) to glycerol-3-phosphate (G3P) to form lysophosphatidic acid (LPA). This enzyme utilizes acyl-phosphate as fatty acyl donor, but not acyl-CoA or acyl-ACP. This Klebsiella pneumoniae subsp. pneumoniae (strain ATCC 700721 / MGH 78578) protein is Glycerol-3-phosphate acyltransferase.